We begin with the raw amino-acid sequence, 347 residues long: GMP reductase (347 aa).

108–131 contributes to the NADP(+) binding site; the sequence is TDFIKLSEILAKSEDLNFICIDIA. Gly181 and Gly183 together coordinate K(+). The Thioimidate intermediate role is filled by Cys186. 216–239 serves as a coordination point for NADP(+); sequence IIGDGGCSCAGDVAKAFGGGADFV.

It belongs to the IMPDH/GMPR family. GuaC type 1 subfamily. In terms of assembly, homotetramer.

The catalysed reaction is IMP + NH4(+) + NADP(+) = GMP + NADPH + 2 H(+). Catalyzes the irreversible NADPH-dependent deamination of GMP to IMP. It functions in the conversion of nucleobase, nucleoside and nucleotide derivatives of G to A nucleotides, and in maintaining the intracellular balance of A and G nucleotides. This is GMP reductase from Shewanella pealeana (strain ATCC 700345 / ANG-SQ1).